The chain runs to 914 residues: PHD finger protein 14 (914 aa).

Residues 19-276 (DALDYDSSDD…EDSLLERPQT (258 aa)) form a disordered region. The segment covering 53–68 (ESAAGSESDSDAAAAS) has biased composition (low complexity). Residues 90-102 (EKVKESFSEETSS) are compositionally biased toward basic and acidic residues. Composition is skewed to acidic residues over residues 155–168 (ELNE…EDDN) and 191–233 (GEED…DSEE). A PHD-type 1 zinc finger spans residues 285 to 346 (ILICCVCLGD…PWFCDACKNG (62 aa)). Positions 288, 291, 305, 308, 313, 316, 340, 343, 351, 354, 371, 374, 407, 410, 424, 429, 434, 437, 461, and 464 each coordinate Zn(2+). The C2HC pre-PHD-type zinc finger occupies 348 to 381 (SPSCELCPSQDGIFKETDAGRWVHVVCALYVPGV). Residues 405–465 (KECSLCEDTR…PFFAYCKQHA (61 aa)) form a PHD-type 2 zinc finger. A coiled-coil region spans residues 596–644 (MIQIQDNIVEQKNLKDKLESEQEKLHMEYDKLCESLEDLQNVNGQLRTE). A PHD-type 3 zinc finger spans residues 692–746 (LYSCGICKKNQDQHLLLLCDTCKLHYHLGCLDPPLTRMPKKTKNSYWQCSECDQA). Positions 695, 698, 710, 713, 718, 721, 740, and 743 each coordinate Zn(2+). The tract at residues 777–838 (PQEMSPEPKK…PKADDTRTEC (62 aa)) is disordered. Over residues 792-802 (TRTRGQKRKRM) the composition is skewed to basic residues. A compositionally biased stretch (basic and acidic residues) spans 803–817 (SICEEEKMEEPLPRE). The PHD-type 4 zinc finger occupies 835-888 (RTECTTCKGPGDNENLVRCDECRLCYHFGCLDPPLKKSPKQTGYGWICQECDTS). 8 residues coordinate Zn(2+): cysteine 838, cysteine 841, cysteine 853, cysteine 856, histidine 861, cysteine 864, cysteine 882, and cysteine 885. Positions 887–914 (TSSSKEEEAQEVEEESVNEETAEQEIPD) are disordered. A compositionally biased stretch (acidic residues) spans 894 to 914 (EAQEVEEESVNEETAEQEIPD).

Interacts with histone H3.

Its subcellular location is the nucleus. Functionally, histone-binding protein. Binds preferentially to unmodified histone H3 but can also bind to a lesser extent to histone H3 trimethylated at 'Lys-9' (H3K9me3) as well as to histone H3 monomethylated at 'Lys-27' (H3K27ac) and trimethylated at 'Lys-27' (H3K27me3). Represses PDGFRA expression, thus playing a role in regulation of mesenchymal cell proliferation. The chain is PHD finger protein 14 from Danio rerio (Zebrafish).